Here is a 478-residue protein sequence, read N- to C-terminus: GTPase Obg (478 aa).

An Obg domain is found at 2–159 (TTFVDRVELH…RDIVLELKTV (158 aa)). Positions 61 to 87 (HHSPHRKATNGQPGAGDNRSGKDGQDL) are disordered. Residues 160 to 330 (ADVALVGYPS…LSFALAGIIA (171 aa)) enclose the OBG-type G domain. GTP-binding positions include 166–173 (GYPSAGKS), 191–195 (FTTLV), 212–215 (DVPG), 282–285 (NKVD), and 311–313 (SAI). Mg(2+)-binding residues include serine 173 and threonine 193. One can recognise an OCT domain in the interval 348–430 (PRAVDDAGFT…ENAVVFDWEP (83 aa)). A disordered region spans residues 436–478 (AEMLGRRGEDHRLEEPRPAAQRRRERDAERDDAEKEYDEFDPF). Positions 439 to 468 (LGRRGEDHRLEEPRPAAQRRRERDAERDDA) are enriched in basic and acidic residues. The segment covering 469–478 (EKEYDEFDPF) has biased composition (acidic residues).

This sequence belongs to the TRAFAC class OBG-HflX-like GTPase superfamily. OBG GTPase family. In terms of assembly, monomer. The cofactor is Mg(2+).

Its subcellular location is the cytoplasm. Its function is as follows. An essential GTPase which binds GTP, GDP and possibly (p)ppGpp with moderate affinity, with high nucleotide exchange rates and a fairly low GTP hydrolysis rate. Plays a role in control of the cell cycle, stress response, ribosome biogenesis and in those bacteria that undergo differentiation, in morphogenesis control. This Streptomyces griseus subsp. griseus (strain JCM 4626 / CBS 651.72 / NBRC 13350 / KCC S-0626 / ISP 5235) protein is GTPase Obg.